A 485-amino-acid chain; its full sequence is UDP-glycosyltransferase 91D1 (485 aa).

UDP-alpha-D-glucose contacts are provided by residues Ser-296, 355-356 (WA), 373-381 (HCGSGSIVE), and 395-398 (FCDQ).

Belongs to the UDP-glycosyltransferase family.

May glycosylate diterpenes or flavonols in leaves. The polypeptide is UDP-glycosyltransferase 91D1 (Stevia rebaudiana (Stevia)).